A 622-amino-acid polypeptide reads, in one-letter code: 1,4-alpha-glucan branching enzyme GlgB (622 aa).

Aspartate 306 functions as the Nucleophile in the catalytic mechanism. The active-site Proton donor is glutamate 358. Residues 581 to 606 are disordered; the sequence is YGGSNVGNRGAVHSDPVEKHGHSHSL.

Belongs to the glycosyl hydrolase 13 family. GlgB subfamily. As to quaternary structure, monomer.

It carries out the reaction Transfers a segment of a (1-&gt;4)-alpha-D-glucan chain to a primary hydroxy group in a similar glucan chain.. It participates in glycan biosynthesis; glycogen biosynthesis. Its function is as follows. Catalyzes the formation of the alpha-1,6-glucosidic linkages in glycogen by scission of a 1,4-alpha-linked oligosaccharide from growing alpha-1,4-glucan chains and the subsequent attachment of the oligosaccharide to the alpha-1,6 position. The chain is 1,4-alpha-glucan branching enzyme GlgB from Salinibacter ruber (strain DSM 13855 / M31).